A 1305-amino-acid chain; its full sequence is DNA-directed DNA polymerase (1305 aa).

It belongs to the DNA polymerase type-C family.

It carries out the reaction DNA(n) + a 2'-deoxyribonucleoside 5'-triphosphate = DNA(n+1) + diphosphate. In terms of biological role, replicates viral genomic DNA. This Bacillus pumilus (Bacillus mesentericus) protein is DNA-directed DNA polymerase.